The primary structure comprises 523 residues: 2-hydroxyisoflavanone synthase (523 aa).

A helical membrane pass occupies residues 2–22 (LVELAITLLVIALFIHLRPTP). Position 450 (Cys450) interacts with heme.

Belongs to the cytochrome P450 family. It depends on heme as a cofactor.

The protein localises to the microsome membrane. The catalysed reaction is (2S)-liquiritigenin + reduced [NADPH--hemoprotein reductase] + O2 = (2R,3S)-2,4',7-trihydroxyisoflavanone + oxidized [NADPH--hemoprotein reductase] + H2O + H(+). It carries out the reaction (2S)-naringenin + reduced [NADPH--hemoprotein reductase] + O2 = 2-hydroxy-2,3-dihydrogenistein + oxidized [NADPH--hemoprotein reductase] + H2O + H(+). Functionally, 2-hydroxyisoflavanone synthase, which catalyzes the hydroxylation associated with 1,2-aryl migration of flavanones. Converts liquiritigenin and naringenin into highly unstable precursors of the isoflavones daidzein and genistein. The protein is 2-hydroxyisoflavanone synthase (CYP93C2) of Glycyrrhiza uralensis (Chinese licorice).